Consider the following 265-residue polypeptide: Serine protease 1 (265 aa).

Positions 1–21 are cleaved as a signal peptide; that stretch reads MKLFVFLALAVAAATAVPAPA. The propeptide occupies 22 to 35; the sequence is QKLTPTPIKDIQGR. The region spanning 36–262 is the Peptidase S1 domain; it reads ITNGYPAYEG…YLDWIRDNTG (227 aa). An intrachain disulfide couples cysteine 63 to cysteine 79. Active-site charge relay system residues include histidine 78 and aspartate 123. 2 cysteine pairs are disulfide-bonded: cysteine 189–cysteine 201 and cysteine 211–cysteine 239. Serine 215 functions as the Charge relay system in the catalytic mechanism.

This sequence belongs to the peptidase S1 family. As to expression, abundantly expressed in the larval gut.

Its function is as follows. Major function may be to aid in digestion. The protein is Serine protease 1 of Drosophila melanogaster (Fruit fly).